Here is a 175-residue protein sequence, read N- to C-terminus: NADH-ubiquinone oxidoreductase chain 6 (175 aa).

The next 5 helical transmembrane spans lie at Met1–Ser21, Ser25–Leu45, Phe47–Val67, Ala88–Leu108, and Tyr149–Met169.

This sequence belongs to the complex I subunit 6 family. In terms of assembly, core subunit of respiratory chain NADH dehydrogenase (Complex I) which is composed of 45 different subunits.

It localises to the mitochondrion inner membrane. The catalysed reaction is a ubiquinone + NADH + 5 H(+)(in) = a ubiquinol + NAD(+) + 4 H(+)(out). Its function is as follows. Core subunit of the mitochondrial membrane respiratory chain NADH dehydrogenase (Complex I) which catalyzes electron transfer from NADH through the respiratory chain, using ubiquinone as an electron acceptor. Essential for the catalytic activity and assembly of complex I. The polypeptide is NADH-ubiquinone oxidoreductase chain 6 (MT-ND6) (Phoca vitulina (Harbor seal)).